The sequence spans 652 residues: Phosphomethylpyrimidine synthase (652 aa).

Residues N235, M264, Y293, H329, 349–351, 390–393, and E429 each bind substrate; these read SRG and DGMR. Residue H433 coordinates Zn(2+). Y456 serves as a coordination point for substrate. Residue H497 participates in Zn(2+) binding. [4Fe-4S] cluster is bound by residues C577, C580, and C585.

It belongs to the ThiC family. In terms of assembly, homodimer. It depends on [4Fe-4S] cluster as a cofactor.

It catalyses the reaction 5-amino-1-(5-phospho-beta-D-ribosyl)imidazole + S-adenosyl-L-methionine = 4-amino-2-methyl-5-(phosphooxymethyl)pyrimidine + CO + 5'-deoxyadenosine + formate + L-methionine + 3 H(+). The protein operates within cofactor biosynthesis; thiamine diphosphate biosynthesis. Catalyzes the synthesis of the hydroxymethylpyrimidine phosphate (HMP-P) moiety of thiamine from aminoimidazole ribotide (AIR) in a radical S-adenosyl-L-methionine (SAM)-dependent reaction. The chain is Phosphomethylpyrimidine synthase from Shewanella sediminis (strain HAW-EB3).